Reading from the N-terminus, the 122-residue chain is UPF0102 protein xcc-b100_3645 (122 aa).

The protein belongs to the UPF0102 family.

This is UPF0102 protein xcc-b100_3645 from Xanthomonas campestris pv. campestris (strain B100).